A 502-amino-acid chain; its full sequence is MNTIFTIILTITILVLSLILKDLLFEGRIKKINKLIPGPSTIPVFGNLLQINAKDFPKSVNDFYERYGKVFRLRLGSVEIVVLTGPEVIDECFNKKHREIFKERYIKFSRFLGKDYNIFSSNGDYHYVLRGILTSEITTRKLNNGRLESNKFILEMFSNLCKDNKETLVKNTPNQIRILAVKLILNFTLGIEENDETILIIVEKIKCIFEAAGLLIYSDYLPFLFPLDIKSMSKNDIISSYFFIKDFIGIKLDAIKIKYEKENELKNETTDETSSKLNNIPIIENYYKNYLDGSIHYDSILFSISDIIFAAVDSTSNGFSLLIGQLINKPEIQDKIYEEIMRNDENNNTNNISFADHTKYPYIISVMNESYRYNSSVPITEPNKTTEDVEVNGYKIAKGTMIIKNLRGTHLSKEFWGEDALEFKPERFKNQPLNQKGLFHFGAGARACPGGRFTESFTFTFLVIMLKNFKIVNPTDIPIDVEGEVGLAMQCKPFDALFIKRN.

Residues 4-24 (IFTIILTITILVLSLILKDLL) traverse the membrane as a helical segment. Cys448 provides a ligand contact to heme.

It belongs to the cytochrome P450 family. The cofactor is heme.

The protein resides in the membrane. This Dictyostelium discoideum (Social amoeba) protein is Probable cytochrome P450 514A4 (cyp514A4).